A 38-amino-acid polypeptide reads, in one-letter code: Iota-conotoxin-like L11.5 (38 aa).

Disulfide bonds link cysteine 5–cysteine 19, cysteine 12–cysteine 24, cysteine 18–cysteine 29, and cysteine 23–cysteine 36.

This sequence belongs to the conotoxin I1 superfamily. In terms of tissue distribution, expressed by the venom duct.

It localises to the secreted. Its function is as follows. Iota-conotoxins bind to voltage-gated sodium channels (Nav) and act as agonists by shifting the voltage-dependence of activation to more hyperpolarized levels. Produces general excitatory symptoms. The chain is Iota-conotoxin-like L11.5 from Conus lynceus (Lynceus cone).